A 301-amino-acid polypeptide reads, in one-letter code: Pyridoxal 5'-phosphate synthase subunit PdxS (301 aa).

Asp-31 provides a ligand contact to D-ribose 5-phosphate. Lys-88 functions as the Schiff-base intermediate with D-ribose 5-phosphate in the catalytic mechanism. Gly-160 is a binding site for D-ribose 5-phosphate. Lys-172 is a binding site for D-glyceraldehyde 3-phosphate. Residues Gly-221 and 242–243 (GS) contribute to the D-ribose 5-phosphate site.

Belongs to the PdxS/SNZ family. In the presence of PdxT, forms a dodecamer of heterodimers.

The enzyme catalyses aldehydo-D-ribose 5-phosphate + D-glyceraldehyde 3-phosphate + L-glutamine = pyridoxal 5'-phosphate + L-glutamate + phosphate + 3 H2O + H(+). It participates in cofactor biosynthesis; pyridoxal 5'-phosphate biosynthesis. In terms of biological role, catalyzes the formation of pyridoxal 5'-phosphate from ribose 5-phosphate (RBP), glyceraldehyde 3-phosphate (G3P) and ammonia. The ammonia is provided by the PdxT subunit. Can also use ribulose 5-phosphate and dihydroxyacetone phosphate as substrates, resulting from enzyme-catalyzed isomerization of RBP and G3P, respectively. This Methanosarcina acetivorans (strain ATCC 35395 / DSM 2834 / JCM 12185 / C2A) protein is Pyridoxal 5'-phosphate synthase subunit PdxS.